Consider the following 63-residue polypeptide: Small ribosomal subunit protein eS17 (63 aa).

The protein belongs to the eukaryotic ribosomal protein eS17 family.

The protein is Small ribosomal subunit protein eS17 (rps17e) of Haloarcula marismortui (strain ATCC 43049 / DSM 3752 / JCM 8966 / VKM B-1809) (Halobacterium marismortui).